The following is a 646-amino-acid chain: Macrolide export ATP-binding/permease protein MacB (646 aa).

One can recognise an ABC transporter domain in the interval 5–243; that stretch reads IELKGVSRTY…TLPKTNRIRQ (239 aa). 41-48 lines the ATP pocket; it reads GASGSGKS. 4 consecutive transmembrane segments (helical) span residues 272 to 292, 518 to 538, 570 to 590, and 611 to 631; these read TLTM…VALG, FSIL…IGVM, IIEA…LSYI, and AAVA…YLPA.

It belongs to the ABC transporter superfamily. Macrolide exporter (TC 3.A.1.122) family. Homodimer. Part of the tripartite efflux system MacAB-TolC, which is composed of an inner membrane transporter, MacB, a periplasmic membrane fusion protein, MacA, and an outer membrane component, TolC. The complex forms a large protein conduit and can translocate molecules across both the inner and outer membranes. Interacts with MacA.

Its subcellular location is the cell inner membrane. Part of the tripartite efflux system MacAB-TolC. MacB is a non-canonical ABC transporter that contains transmembrane domains (TMD), which form a pore in the inner membrane, and an ATP-binding domain (NBD), which is responsible for energy generation. Confers resistance against macrolides. The chain is Macrolide export ATP-binding/permease protein MacB from Escherichia coli.